We begin with the raw amino-acid sequence, 432 residues long: 3-phosphoshikimate 1-carboxyvinyltransferase (432 aa).

Residues lysine 22, serine 23, and arginine 27 each contribute to the 3-phosphoshikimate site. Lysine 22 provides a ligand contact to phosphoenolpyruvate. Residues glycine 96 and arginine 127 each coordinate phosphoenolpyruvate. 3-phosphoshikimate-binding residues include serine 173, serine 174, glutamine 175, serine 201, aspartate 316, asparagine 339, and lysine 343. A phosphoenolpyruvate-binding site is contributed by glutamine 175. Aspartate 316 acts as the Proton acceptor in catalysis. Positions 347, 391, and 416 each coordinate phosphoenolpyruvate.

It belongs to the EPSP synthase family. As to quaternary structure, monomer.

It localises to the cytoplasm. The enzyme catalyses 3-phosphoshikimate + phosphoenolpyruvate = 5-O-(1-carboxyvinyl)-3-phosphoshikimate + phosphate. Its pathway is metabolic intermediate biosynthesis; chorismate biosynthesis; chorismate from D-erythrose 4-phosphate and phosphoenolpyruvate: step 6/7. Catalyzes the transfer of the enolpyruvyl moiety of phosphoenolpyruvate (PEP) to the 5-hydroxyl of shikimate-3-phosphate (S3P) to produce enolpyruvyl shikimate-3-phosphate and inorganic phosphate. This is 3-phosphoshikimate 1-carboxyvinyltransferase from Actinobacillus pleuropneumoniae serotype 7 (strain AP76).